A 450-amino-acid polypeptide reads, in one-letter code: UDP-N-acetylmuramate--L-alanine ligase (450 aa).

112–118 lines the ATP pocket; sequence GTHGKTT.

This sequence belongs to the MurCDEF family.

The protein resides in the cytoplasm. The catalysed reaction is UDP-N-acetyl-alpha-D-muramate + L-alanine + ATP = UDP-N-acetyl-alpha-D-muramoyl-L-alanine + ADP + phosphate + H(+). The protein operates within cell wall biogenesis; peptidoglycan biosynthesis. Its function is as follows. Cell wall formation. This is UDP-N-acetylmuramate--L-alanine ligase from Endomicrobium trichonymphae.